A 67-amino-acid chain; its full sequence is DNA-directed RNA polymerase subunit omega (67 aa).

The protein belongs to the RNA polymerase subunit omega family. As to quaternary structure, the RNAP catalytic core consists of 2 alpha, 1 beta, 1 beta' and 1 omega subunit. When a sigma factor is associated with the core the holoenzyme is formed, which can initiate transcription.

It catalyses the reaction RNA(n) + a ribonucleoside 5'-triphosphate = RNA(n+1) + diphosphate. Promotes RNA polymerase assembly. Latches the N- and C-terminal regions of the beta' subunit thereby facilitating its interaction with the beta and alpha subunits. The protein is DNA-directed RNA polymerase subunit omega of Delftia acidovorans (strain DSM 14801 / SPH-1).